Consider the following 388-residue polypeptide: MKWLGLLGLVALSECLVTIPLMKVKSMRENLRENDILLDYLEKHPYRPTYKLLSGQQDPDVSFEPLRNYLDLAYIGIISIGTPPQEFKVVLDTGSADLWVPSIYCSSPACGKHNTFNPLLSSTFLVSGRPINIVYGSGRMSGFLAYDTVQIAGLVDVAQAFGLSLQEPGKFMEYAVFDGILGLSYPSLSFEGITPVFDNLWAQGLISQNLFAFYLSSKEERGSMLMLGGVDPSYYSGDLHWVPVSRPLYWQLAVDRISMNGEAIGCDSGCQGIVDTGTSLLIGPRDPVLNIQKIINAQHSHGGEYIIDCDTISTLPDIIFTIDGVDYPVPASAYIRKSSVHGCYSNFDESAAHESEPYEVWVLGDVFLRLYFTVFDRANNRIGLAPAV.

The first 15 residues, 1 to 15 (MKWLGLLGLVALSEC), serve as a signal peptide directing secretion. The propeptide at 16-58 (LVTIPLMKVKSMRENLRENDILLDYLEKHPYRPTYKLLSGQQD) is activation peptide. Residues 74 to 385 (YIGIISIGTP…DRANNRIGLA (312 aa)) form the Peptidase A1 domain. The active site involves D92. Cystine bridges form between C105-C110 and C266-C270. The active site involves D275. Cysteines 309 and 343 form a disulfide.

Belongs to the peptidase A1 family.

It is found in the secreted. The catalysed reaction is Preferential cleavage: hydrophobic, preferably aromatic, residues in P1 and P1' positions. Cleaves 1-Phe-|-Val-2, 4-Gln-|-His-5, 13-Glu-|-Ala-14, 14-Ala-|-Leu-15, 15-Leu-|-Tyr-16, 16-Tyr-|-Leu-17, 23-Gly-|-Phe-24, 24-Phe-|-Phe-25 and 25-Phe-|-Tyr-26 bonds in the B chain of insulin.. Functionally, shows particularly broad specificity; although bonds involving phenylalanine and leucine are preferred, many others are also cleaved to some extent. This is Pepsin F from Oryctolagus cuniculus (Rabbit).